The sequence spans 88 residues: Small ribosomal subunit protein uS15 (88 aa).

Positions 1 to 12 (MLTNTDRQQVIA) are enriched in polar residues. Residues 1–23 (MLTNTDRQQVIAQYQRAPGDTGS) are disordered.

The protein belongs to the universal ribosomal protein uS15 family. In terms of assembly, part of the 30S ribosomal subunit. Forms a bridge to the 50S subunit in the 70S ribosome, contacting the 23S rRNA.

One of the primary rRNA binding proteins, it binds directly to 16S rRNA where it helps nucleate assembly of the platform of the 30S subunit by binding and bridging several RNA helices of the 16S rRNA. Its function is as follows. Forms an intersubunit bridge (bridge B4) with the 23S rRNA of the 50S subunit in the ribosome. The polypeptide is Small ribosomal subunit protein uS15 (Psychrobacter sp. (strain PRwf-1)).